We begin with the raw amino-acid sequence, 849 residues long: ATP-binding cassette sub-family B member 6 (849 aa).

The Lumenal portion of the chain corresponds to 1–25; sequence MVRLGSYCEHNGSISQAWLDSGLSP. The segment at 1-195 is required for the lysosomal targeting; the sequence is MVRLGSYCEH…TLFLFVLGIR (195 aa). Residues 1 to 227 are required for ATPase activity; the sequence is MVRLGSYCEH…SQPLLRDPNQ (227 aa). Cysteines 8 and 26 form a disulfide. Asparagine 11 carries N-linked (GlcNAc...) asparagine glycosylation. Residues 26 to 46 traverse the membrane as a helical segment; sequence CFYFTLVPSVLLSFSFLLGAL. Residues 47–72 are Cytoplasmic-facing; that stretch reads QSALYARHSTTMEPKYIPRSRLYRLQ. The helical transmembrane segment at 73–93 threads the bilayer; that stretch reads IVLSVVLILQSVIGLIWQAAG. The Lumenal segment spans residues 94–98; it reads TDVVY. Residues 99–119 form a helical membrane-spanning segment; the sequence is GYMIVHGCLSVVAWGFSLWLL. The Cytoplasmic segment spans residues 120-136; the sequence is HLERTRALVREKSRGHG. Residues 137–157 form a helical membrane-spanning segment; the sequence is VVLLLFWALAFAAENLAFISW. Over 158 to 173 the chain is Lumenal; sequence QSPNWWWLSRDTVPQK. Residues 174 to 194 traverse the membrane as a helical segment; sequence VQFGLWITRYVCTLFLFVLGI. The Cytoplasmic portion of the chain corresponds to 195–254; it reads RAPGRPRKPYIVLINEDERDVETSQPLLRDPNQSTWQGFKKKLLLVMQYIWPRRNIPLQL. The chain crosses the membrane as a helical span at residues 255–275; the sequence is LVALCMGLMGLERAINVFVPI. Residues 256–547 enclose the ABC transmembrane type-1 domain; it reads VALCMGLMGL…FGTYYRMIQS (292 aa). Residues 276 to 291 lie on the Lumenal side of the membrane; that stretch reads YAKKIVDGLTEDSTWN. The helical transmembrane segment at 292–312 threads the bilayer; that stretch reads ILAVTVCIYVLLKFLQGGGAG. Residues 313–373 are Cytoplasmic-facing; the sequence is TTGFLSNLRT…VDRGTSSINS (61 aa). A helical transmembrane segment spans residues 374 to 394; it reads LLSYIVFSILPTIADIVIGIV. At 395-401 the chain is on the lumenal side; the sequence is YFTSSFN. Residues 402–422 traverse the membrane as a helical segment; it reads AWFGLIIFVCMTLYLTLTIII. At 423-492 the chain is on the cytoplasmic side; sequence TEWRTKYRRE…ASLAMLNQTQ (70 aa). The chain crosses the membrane as a helical span at residues 493–513; sequence NLIIGLGLLAGSLLCAYFVTE. Topologically, residues 514–520 are lumenal; that stretch reads NKFKVGD. Residues 521–541 form a helical membrane-spanning segment; the sequence is YVLFGTYIIQLYTPLNWFGTY. At 542–849 the chain is on the cytoplasmic side; sequence YRMIQSSFID…PPKATPRRGH (308 aa). The ABC transporter domain occupies 581–815; sequence IEFENVHFSY…GGVYAGMWQK (235 aa). Residues tyrosine 590 and 614–625 contribute to the ATP site; that span reads GPSGSGKSTIIR. The span at 814-825 shows a compositional bias: low complexity; the sequence is QKQQSGSESSSD. A disordered region spans residues 814-849; sequence QKQQSGSESSSDSDSERKDRTSEKLQPPKATPRRGH. Positions 827–836 are enriched in basic and acidic residues; sequence DSERKDRTSE.

Belongs to the ABC transporter superfamily. ABCB family. Heavy Metal importer (TC 3.A.1.210) subfamily. As to quaternary structure, homodimer. Post-translationally, N-glycosylated.

It is found in the cell membrane. The protein localises to the mitochondrion outer membrane. It localises to the endoplasmic reticulum membrane. Its subcellular location is the golgi apparatus membrane. The protein resides in the endosome membrane. It is found in the lysosome membrane. The protein localises to the late endosome membrane. It localises to the early endosome membrane. Its subcellular location is the secreted. The protein resides in the extracellular exosome. It is found in the mitochondrion. The protein localises to the endosome. It localises to the multivesicular body membrane. Its subcellular location is the melanosome membrane. It catalyses the reaction heme b(in) + ATP + H2O = heme b(out) + ADP + phosphate + H(+). It carries out the reaction coproporphyrin III(in) + ATP + H2O = coproporphyrin III(out) + ADP + phosphate + H(+). The enzyme catalyses pheophorbide a(in) + ATP + H2O = pheophorbide a(out) + ADP + phosphate + H(+). The catalysed reaction is coproporphyrinogen III(in) + ATP + H2O = coproporphyrinogen III(out) + ADP + phosphate + H(+). It catalyses the reaction protoporphyrin IX(in) + ATP + H2O = protoporphyrin IX(out) + ADP + phosphate + H(+). It carries out the reaction coproporphyrin I(in) + ATP + H2O = coproporphyrin I(out) + ADP + phosphate + H(+). The enzyme catalyses uroporphyrin I(in) + ATP + H2O = uroporphyrin I(out) + ADP + phosphate + H(+). The catalysed reaction is uroporphyrin III(in) + ATP + H2O = uroporphyrin III(out) + ADP + phosphate + H(+). ATP-dependent transporter that catalyzes the transport of a broad-spectrum of porphyrins from the cytoplasm to the extracellular space through the plasma membrane or into the vesicle lumen. May also function as an ATP-dependent importer of porphyrins from the cytoplasm into the mitochondria, in turn may participate in the de novo heme biosynthesis regulation and in the coordination of heme and iron homeostasis during phenylhydrazine stress. May also play a key role in the early steps of melanogenesis producing PMEL amyloid fibrils. In vitro, it confers to cells a resistance to toxic metal such as arsenic and cadmium and against chemotherapeutics agent such as 5-fluorouracil, SN-38 and vincristin. In addition may play a role in the transition metal homeostasis. This is ATP-binding cassette sub-family B member 6 (abcb6) from Xenopus tropicalis (Western clawed frog).